The following is a 340-amino-acid chain: 4-hydroxythreonine-4-phosphate dehydrogenase (340 aa).

Substrate-binding residues include His-141 and Thr-142. Residues His-177, His-222, and His-277 each coordinate a divalent metal cation. Positions 285, 294, and 303 each coordinate substrate.

Belongs to the PdxA family. In terms of assembly, homodimer. The cofactor is Zn(2+). Requires Mg(2+) as cofactor. It depends on Co(2+) as a cofactor.

Its subcellular location is the cytoplasm. The enzyme catalyses 4-(phosphooxy)-L-threonine + NAD(+) = 3-amino-2-oxopropyl phosphate + CO2 + NADH. It participates in cofactor biosynthesis; pyridoxine 5'-phosphate biosynthesis; pyridoxine 5'-phosphate from D-erythrose 4-phosphate: step 4/5. Catalyzes the NAD(P)-dependent oxidation of 4-(phosphooxy)-L-threonine (HTP) into 2-amino-3-oxo-4-(phosphooxy)butyric acid which spontaneously decarboxylates to form 3-amino-2-oxopropyl phosphate (AHAP). This Maricaulis maris (strain MCS10) (Caulobacter maris) protein is 4-hydroxythreonine-4-phosphate dehydrogenase.